Here is a 973-residue protein sequence, read N- to C-terminus: ATP-dependent DNA helicase homolog RECG1, chloroplastic/mitochondrial (973 aa).

The tract at residues 1 to 208 (MAAVTLSPCS…ATSEVEATSD (208 aa)) is sufficient for chloroplastic and mitochondrial trgeting. The disordered stretch occupies residues 174–200 (LLQNDDSSDPREDILDDGSSFTSKTAT). A Helicase ATP-binding domain is found at 536–725 (DLKRPVPMNR…LYGDISLTQI (190 aa)). 549–556 (GDVGCGKT) contributes to the ATP binding site. The DEQQ box motif lies at 655–658 (DEQQ). The region spanning 746–904 (GIKEVYSMML…GFYLANIDLL (159 aa)) is the Helicase C-terminal domain.

Belongs to the helicase family. RecG subfamily. In terms of tissue distribution, expressed in most tissues, not seen in pollen, ovules or developing seeds.

Its subcellular location is the plastid. The protein localises to the chloroplast. It localises to the mitochondrion. The catalysed reaction is Couples ATP hydrolysis with the unwinding of duplex DNA by translocating in the 3'-5' direction.. It carries out the reaction ATP + H2O = ADP + phosphate + H(+). Its function is as follows. Plays a critical role in recombination and DNA repair. Helps process Holliday junction (HJ) intermediates to mature products by catalyzing branch migration. Has replication fork regression activity, unwinds stalled or blocked replication forks to make a HJ that can be resolved. Has a DNA unwinding activity characteristic of a DNA helicase with 3'-5' polarity. Plays a role in recombination surveillance and repair of double-stranded (ds)DNA breaks in the mitochondrion. May be able to dissociate D- and R-loops. Able to complement UV sensitivity of a recG deletion in E.coli. The protein is ATP-dependent DNA helicase homolog RECG1, chloroplastic/mitochondrial of Arabidopsis thaliana (Mouse-ear cress).